The primary structure comprises 209 residues: Large ribosomal subunit protein bL25 (209 aa).

The segment at 185–209 (SKATTGEEEGAEAAGEGEEAEEKPE) is disordered. The span at 190–209 (GEEEGAEAAGEGEEAEEKPE) shows a compositional bias: acidic residues.

This sequence belongs to the bacterial ribosomal protein bL25 family. CTC subfamily. Part of the 50S ribosomal subunit; part of the 5S rRNA/L5/L18/L25 subcomplex. Contacts the 5S rRNA. Binds to the 5S rRNA independently of L5 and L18.

In terms of biological role, this is one of the proteins that binds to the 5S RNA in the ribosome where it forms part of the central protuberance. In Syntrophomonas wolfei subsp. wolfei (strain DSM 2245B / Goettingen), this protein is Large ribosomal subunit protein bL25.